Consider the following 786-residue polypeptide: DENN domain-containing protein 1C (786 aa).

The uDENN domain occupies 13–158; it reads FDWFFEAGCP…MDSSITVRSE (146 aa). The cDENN domain maps to 182–318; it reads SLPSIPENRN…VVSLLRLRLR (137 aa). The dDENN domain occupies 320-398; that stretch reads VALSPGEGVS…ESRLEKLNAG (79 aa). The short motif at 401–405 is the FXDXF motif element; sequence FSDQF. The interval 481 to 553 is disordered; sequence KDGDSGLQRG…LSPGDTQNPW (73 aa). Residues 527 to 541 show a composition bias toward basic and acidic residues; that stretch reads LKTEEGPSEPLRERS. Residues 542 to 552 are compositionally biased toward polar residues; the sequence is PTLSPGDTQNP. Residue Ser-565 is modified to Phosphoserine. The Clathrin box motif lies at 570-579; that stretch reads DLLSEILDSL. Disordered stretches follow at residues 653-741 and 762-786; these read YSKN…QPPQ and SHVSTQQRPQDKQPRVADLKKCFEN. Residues 657 to 675 show a composition bias toward low complexity; sequence SCSQPFQQSPPSQGDPGPS. Positions 706–740 are enriched in polar residues; that stretch reads LLVSTEPNSDAVQRLQSISSPSCSHSAENPRNQPP. Residues 770–786 show a composition bias toward basic and acidic residues; the sequence is PQDKQPRVADLKKCFEN.

Exhibits low nucleotide-independent RAB35-binding activity. Interacts with clathrin heavy chain/CLTC and with AP2A2, but not with AP2B1.

It localises to the cytoplasm. The protein localises to the cytosol. It is found in the cytoplasmic vesicle. Its subcellular location is the clathrin-coated vesicle. In terms of biological role, guanine nucleotide exchange factor (GEF) which may activate RAB8A, RAB13 and RAB35. Promotes the exchange of GDP to GTP, converting inactive GDP-bound Rab proteins into their active GTP-bound form. The protein is DENN domain-containing protein 1C (Dennd1c) of Mus musculus (Mouse).